A 371-amino-acid chain; its full sequence is Leu/Ile/Val-binding protein homolog 1 (371 aa).

Positions 1 to 23 are cleaved as a signal peptide; it reads MRKTLFSGVALAAVIAFGGSAWA.

This sequence belongs to the leucine-binding protein family.

In terms of biological role, component of an amino-acid transport system. In Brucella melitensis biotype 1 (strain ATCC 23456 / CCUG 17765 / NCTC 10094 / 16M), this protein is Leu/Ile/Val-binding protein homolog 1.